A 418-amino-acid polypeptide reads, in one-letter code: D-amino acid dehydrogenase 1 (418 aa).

3–17 (IMVLGGGVIGVTTAY) is an FAD binding site.

This sequence belongs to the DadA oxidoreductase family. FAD is required as a cofactor.

The enzyme catalyses a D-alpha-amino acid + A + H2O = a 2-oxocarboxylate + AH2 + NH4(+). The protein operates within amino-acid degradation; D-alanine degradation; NH(3) and pyruvate from D-alanine: step 1/1. Oxidative deamination of D-amino acids. This is D-amino acid dehydrogenase 1 (dadA1) from Mesorhizobium japonicum (strain LMG 29417 / CECT 9101 / MAFF 303099) (Mesorhizobium loti (strain MAFF 303099)).